The following is a 716-amino-acid chain: Fatty acid oxidation complex subunit alpha (716 aa).

An enoyl-CoA hydratase/isomerase region spans residues 1–189 (MIYQSPTIQV…KVGAVDAVVA (189 aa)). Residue D296 participates in substrate binding. The 3-hydroxyacyl-CoA dehydrogenase stretch occupies residues 311–716 (KEVNNAAVLG…AANNGSYYQA (406 aa)). NAD(+) contacts are provided by residues M324, D343, 400 to 402 (VVE), K407, and S429. The active-site For 3-hydroxyacyl-CoA dehydrogenase activity is H450. Position 453 (N453) interacts with NAD(+). The substrate site is built by N500 and Y660.

In the N-terminal section; belongs to the enoyl-CoA hydratase/isomerase family. This sequence in the C-terminal section; belongs to the 3-hydroxyacyl-CoA dehydrogenase family. Heterotetramer of two alpha chains (FadB) and two beta chains (FadA).

It catalyses the reaction a (3S)-3-hydroxyacyl-CoA + NAD(+) = a 3-oxoacyl-CoA + NADH + H(+). It carries out the reaction a (3S)-3-hydroxyacyl-CoA = a (2E)-enoyl-CoA + H2O. The catalysed reaction is a 4-saturated-(3S)-3-hydroxyacyl-CoA = a (3E)-enoyl-CoA + H2O. The enzyme catalyses (3S)-3-hydroxybutanoyl-CoA = (3R)-3-hydroxybutanoyl-CoA. It catalyses the reaction a (3Z)-enoyl-CoA = a 4-saturated (2E)-enoyl-CoA. It carries out the reaction a (3E)-enoyl-CoA = a 4-saturated (2E)-enoyl-CoA. Its pathway is lipid metabolism; fatty acid beta-oxidation. Its function is as follows. Involved in the aerobic and anaerobic degradation of long-chain fatty acids via beta-oxidation cycle. Catalyzes the formation of 3-oxoacyl-CoA from enoyl-CoA via L-3-hydroxyacyl-CoA. It can also use D-3-hydroxyacyl-CoA and cis-3-enoyl-CoA as substrate. The sequence is that of Fatty acid oxidation complex subunit alpha from Shewanella baltica (strain OS155 / ATCC BAA-1091).